The following is a 466-amino-acid chain: UDP-N-acetylmuramoylalanine--D-glutamate ligase (466 aa).

121–127 (GTNGKST) serves as a coordination point for ATP.

This sequence belongs to the MurCDEF family.

The protein localises to the cytoplasm. It catalyses the reaction UDP-N-acetyl-alpha-D-muramoyl-L-alanine + D-glutamate + ATP = UDP-N-acetyl-alpha-D-muramoyl-L-alanyl-D-glutamate + ADP + phosphate + H(+). The protein operates within cell wall biogenesis; peptidoglycan biosynthesis. Cell wall formation. Catalyzes the addition of glutamate to the nucleotide precursor UDP-N-acetylmuramoyl-L-alanine (UMA). This chain is UDP-N-acetylmuramoylalanine--D-glutamate ligase, found in Bradyrhizobium diazoefficiens (strain JCM 10833 / BCRC 13528 / IAM 13628 / NBRC 14792 / USDA 110).